Here is a 433-residue protein sequence, read N- to C-terminus: Probable glycine dehydrogenase (decarboxylating) subunit 1 (433 aa).

Belongs to the GcvP family. N-terminal subunit subfamily. The glycine cleavage system is composed of four proteins: P, T, L and H. In this organism, the P 'protein' is a heterodimer of two subunits.

The catalysed reaction is N(6)-[(R)-lipoyl]-L-lysyl-[glycine-cleavage complex H protein] + glycine + H(+) = N(6)-[(R)-S(8)-aminomethyldihydrolipoyl]-L-lysyl-[glycine-cleavage complex H protein] + CO2. The glycine cleavage system catalyzes the degradation of glycine. The P protein binds the alpha-amino group of glycine through its pyridoxal phosphate cofactor; CO(2) is released and the remaining methylamine moiety is then transferred to the lipoamide cofactor of the H protein. In Thermoplasma acidophilum (strain ATCC 25905 / DSM 1728 / JCM 9062 / NBRC 15155 / AMRC-C165), this protein is Probable glycine dehydrogenase (decarboxylating) subunit 1.